The chain runs to 328 residues: Bidirectional sugar transporter SWEET16 (328 aa).

At 1 to 5 the chain is on the extracellular side; that stretch reads MADPS. The chain crosses the membrane as a helical span at residues 6–26; that stretch reads FFVGIVGNVISILVFASPIAT. One can recognise a MtN3/slv 1 domain in the interval 6-92; it reads FFVGIVGNVI…TLYLAYAPRE (87 aa). At 27–38 the chain is on the cytoplasmic side; it reads FRRIVRSKSTEE. The helical transmembrane segment at 39-56 threads the bilayer; that stretch reads FRWLPYVTTLLSTSLWTF. Residues 57–63 are Extracellular-facing; that stretch reads YGLHKPG. Residues 64 to 84 form a helical membrane-spanning segment; sequence GLLIVTVNGSGAALEAIYVTL. The Cytoplasmic portion of the chain corresponds to 85-99; the sequence is YLAYAPRETKAKMVK. Residues 100-120 traverse the membrane as a helical segment; it reads VVLAVNVGALAAVVAVALVAL. At 121–125 the chain is on the extracellular side; that stretch reads HGGVR. A helical transmembrane segment spans residues 126-146; sequence LFVVGVLCAALTIGMYAAPMA. One can recognise a MtN3/slv 2 domain in the interval 127–213; it reads FVVGVLCAAL…LYMAYRRTKK (87 aa). The Cytoplasmic segment spans residues 147–161; that stretch reads AMRTVVKTRSVEYMP. Residues 162–182 form a helical membrane-spanning segment; the sequence is FSLSFFLFLNGGVWSVYSLLV. At 183–185 the chain is on the extracellular side; sequence KDY. Residues 186–206 form a helical membrane-spanning segment; the sequence is FIGIPNAIGFALGTAQLALYM. Over 207 to 328 the chain is Cytoplasmic; that stretch reads AYRRTKKPAG…ATTAGPGDRH (122 aa). Positions 288–299 are enriched in basic residues; it reads HQHHGGHHHHHR. The segment at 288-328 is disordered; the sequence is HQHHGGHHHHHRFDTVPDDDDEAVAAGGTTPATTAGPGDRH. Over residues 312-328 the composition is skewed to low complexity; that stretch reads AAGGTTPATTAGPGDRH.

It belongs to the SWEET sugar transporter family. In terms of assembly, forms homooligomers and/or heterooligomers.

It localises to the cell membrane. Functionally, mediates both low-affinity uptake and efflux of sugar across the plasma membrane. In Oryza sativa subsp. japonica (Rice), this protein is Bidirectional sugar transporter SWEET16 (SWEET16).